Reading from the N-terminus, the 852-residue chain is Protein SEY1 (852 aa).

Over 1–738 (MNGHFAAIGN…KRSAIGGITQ (738 aa)) the chain is Cytoplasmic. The 248-residue stretch at 47–294 (GFNYHLISVF…IPADGLSVYA (248 aa)) folds into the GB1/RHD3-type G domain. 57–64 (GSQSTGKS) is a GTP binding site. Residues 475-500 (QYKLFEKELDEVSARLRKEEMRRLAI) adopt a coiled-coil conformation. Residues 739–759 (VPLYFYVILLILGWNEILMVL) traverse the membrane as a helical segment. Over 760–762 (RNP) the chain is Lumenal. A helical membrane pass occupies residues 763-783 (FLILLILVMGGGTYIAYSLNL). Residues 784 to 852 (LGPMMQMSNA…AQDISDDDDI (69 aa)) are Cytoplasmic-facing.

Belongs to the TRAFAC class dynamin-like GTPase superfamily. GB1/RHD3 GTPase family. RHD3 subfamily.

The protein resides in the endoplasmic reticulum membrane. Cooperates with the reticulon proteins and tubule-shaping DP1 family proteins to generate and maintain the structure of the tubular endoplasmic reticulum network. Has GTPase activity, which is required for its function in ER organization. The sequence is that of Protein SEY1 from Podospora anserina (strain S / ATCC MYA-4624 / DSM 980 / FGSC 10383) (Pleurage anserina).